The primary structure comprises 111 residues: DNA-directed RNA polymerase subunit Rpo11 (111 aa).

It belongs to the archaeal Rpo11/eukaryotic RPB11/RPC19 RNA polymerase subunit family. As to quaternary structure, part of the RNA polymerase complex.

It is found in the cytoplasm. The enzyme catalyses RNA(n) + a ribonucleoside 5'-triphosphate = RNA(n+1) + diphosphate. Its function is as follows. DNA-dependent RNA polymerase (RNAP) catalyzes the transcription of DNA into RNA using the four ribonucleoside triphosphates as substrates. This chain is DNA-directed RNA polymerase subunit Rpo11, found in Thermoplasma acidophilum (strain ATCC 25905 / DSM 1728 / JCM 9062 / NBRC 15155 / AMRC-C165).